A 283-amino-acid chain; its full sequence is Protein BASIC PENTACYSTEINE1 (283 aa).

The interval 111–170 is disordered; sequence RFEENPIPPPAPCEEQTGKKRKMRGSIATPTVPKAKKMRKPKEERDVTNNNVQQQQQRVK. Over residues 158–169 the composition is skewed to low complexity; that stretch reads TNNNVQQQQQRV.

The protein belongs to the BBR/BPC family. In terms of tissue distribution, expressed in seedlings, leaves and pistils. Detected in the base of flowers and tips of carpels, in leaf and sepal vasculature, in young rosette, in the lateral and tip of primary roots, and in the whole ovule.

The protein resides in the nucleus. In terms of biological role, transcriptional regulator that specifically binds to GA-rich elements (GAGA-repeats) present in regulatory sequences of genes involved in developmental processes. Negatively regulates the homeotic gene AGL11/STK, which controls ovule primordium identity, by a cooperative binding to purine-rich elements present in the regulatory sequence leading to DNA conformational changes. The sequence is that of Protein BASIC PENTACYSTEINE1 (BPC1) from Arabidopsis thaliana (Mouse-ear cress).